We begin with the raw amino-acid sequence, 123 residues long: Large ribosomal subunit protein uL14c (123 aa).

It belongs to the universal ribosomal protein uL14 family. As to quaternary structure, part of the 50S ribosomal subunit.

It localises to the plastid. The protein localises to the chloroplast. Its function is as follows. Binds to 23S rRNA. In Oryza nivara (Indian wild rice), this protein is Large ribosomal subunit protein uL14c.